A 1024-amino-acid chain; its full sequence is Beta-galactosidase (1024 aa).

Substrate contacts are provided by Asn-103 and Asp-202. Na(+) is bound at residue Asp-202. Residues Glu-417, His-419, and Glu-462 each contribute to the Mg(2+) site. Residues Glu-462 and 538-541 each bind substrate; that span reads EYAH. The active-site Proton donor is Glu-462. Glu-538 functions as the Nucleophile in the catalytic mechanism. Asn-598 is a binding site for Mg(2+). Na(+) contacts are provided by Phe-602 and Asn-605. Asn-605 and Trp-1000 together coordinate substrate.

Belongs to the glycosyl hydrolase 2 family. As to quaternary structure, homotetramer. Mg(2+) is required as a cofactor. Na(+) serves as cofactor.

The enzyme catalyses Hydrolysis of terminal non-reducing beta-D-galactose residues in beta-D-galactosides.. In Escherichia coli O6:H1 (strain CFT073 / ATCC 700928 / UPEC), this protein is Beta-galactosidase.